The following is a 595-amino-acid chain: CDPK-related kinase 3 (595 aa).

Residues 1–131 (MGQCYGKVNQ…GTEPEQSLDK (131 aa)) form a disordered region. Residue G2 is the site of N-myristoyl glycine attachment. Over residues 20-37 (NTTTYVVSGDGNQIQPLT) the composition is skewed to polar residues. Positions 111-124 (KPKEGPIPEERGTE) are enriched in basic and acidic residues. The Protein kinase domain maps to 143 to 405 (YELGKEVGRG…AVQALTHPWL (263 aa)). ATP is bound by residues 149–157 (VGRGHFGHT) and K175. D271 serves as the catalytic Proton acceptor. At S311 the chain carries Phosphoserine. Phosphoserine; by CPK1 and CPK34 is present on S353. The autoinhibitory domain stretch occupies residues 409–439 (SRVIPLDILIYKLVKAYLHATPLRRAALKAL). The tract at residues 428–448 (ATPLRRAALKALAKALTENEL) is calmodulin binding (CaMBD). EF-hand domains follow at residues 446–482 (NELVYLRAQFMLLGPNKDGSVSLENFKTALMQNATDA), 483–518 (MRESRVPEILHTMESLAYRKMYFEEFCAAAISIHQL), 519–558 (EAVDAWEEIATAGFQHFETEGNRVITIEELARELNVGASA), and 559–588 (YGHLRDWVRSSDGKLSYLGFTKFLHGVTLR). Ca(2+)-binding residues include N461, D463, S465, K502, E507, N540, E547, S568, D570, and K572. S574 is subject to Phosphoserine.

It belongs to the protein kinase superfamily. Ser/Thr protein kinase family. CDPK subfamily. Binds calmodulin (CaM) in a calcium-dependent manner. Interacts with GLN1-1. Post-translationally, autophosphorylated. As to expression, ubiquitously expressed with higher levels in siliques and roots, especially at the root cap. Particularly present in vascular bundles of stems and leaves.

Its subcellular location is the cytoplasm. It localises to the membrane. It carries out the reaction L-seryl-[protein] + ATP = O-phospho-L-seryl-[protein] + ADP + H(+). The catalysed reaction is L-threonyl-[protein] + ATP = O-phospho-L-threonyl-[protein] + ADP + H(+). With respect to regulation, not activated by calcium. Autophosphorylation may play an important role in the regulation of the kinase activity. Stimulated by magnesium ions (optimum at 10-15 mM) and manganese ions. In terms of biological role, may play a role in signal transduction pathways that involve calcium as a second messenger. Serine/threonine kinase that phosphorylates histone H3 an GLN1-1. This Arabidopsis thaliana (Mouse-ear cress) protein is CDPK-related kinase 3 (CRK3).